The sequence spans 59 residues: Ribosome biogenesis protein Nop10 (59 aa).

This sequence belongs to the NOP10 family.

Its function is as follows. Involved in ribosome biogenesis; more specifically in 18S rRNA pseudouridylation and in cleavage of pre-rRNA. The sequence is that of Ribosome biogenesis protein Nop10 from Thermococcus kodakarensis (strain ATCC BAA-918 / JCM 12380 / KOD1) (Pyrococcus kodakaraensis (strain KOD1)).